The sequence spans 465 residues: Putative adhesin P1-like protein MPN_286 (465 aa).

Disordered regions lie at residues 9-48 (GNGH…STFS), 59-78 (QGTL…PKWP), and 93-167 (WRND…LPPN). Low complexity predominate over residues 21–37 (SNSSTSGVTTQGQQSQN). The segment covering 38 to 48 (ASGTEPASTFS) has biased composition (polar residues). A compositionally biased stretch (low complexity) spans 111 to 131 (TSATGSGQQGSSSGTTNSAGN). The span at 135–144 (LKQDKVDKSG) shows a compositional bias: basic and acidic residues. The segment covering 145–156 (DSVTVAETTSGD) has biased composition (polar residues). Positions 157-167 (NLTNYTNLPPN) are enriched in low complexity.

The protein belongs to the adhesin P1 family.

In Mycoplasma pneumoniae (strain ATCC 29342 / M129 / Subtype 1) (Mycoplasmoides pneumoniae), this protein is Putative adhesin P1-like protein MPN_286.